We begin with the raw amino-acid sequence, 257 residues long: Small ribosomal subunit protein uS15m (257 aa).

The transit peptide at 1 to 57 (MLRAAWRALSSVRVQAVTQAPVPALRARSSASLPSARCGLQTPSLLNAARAYAVQKP) directs the protein to the mitochondrion. The tract at residues 228–257 (KAAAAAAKKEKRERVPENPSNALPEKTKEN) is disordered. Positions 234-243 (AKKEKRERVP) are enriched in basic and acidic residues.

It belongs to the universal ribosomal protein uS15 family. Component of the mitochondrial ribosome small subunit (28S) which comprises a 12S rRNA and about 30 distinct proteins. Interacts with METTL17.

Its subcellular location is the mitochondrion matrix. The sequence is that of Small ribosomal subunit protein uS15m (Mrps15) from Rattus norvegicus (Rat).